A 658-amino-acid chain; its full sequence is Transport protein particle subunit trs85-1 (658 aa).

It belongs to the TRS85 family. As to quaternary structure, part of the multisubunit TRAPP (transport protein particle) complexes I and II.

It is found in the golgi apparatus. It localises to the cis-Golgi network. Functionally, component of the TRAPP I and TRAPP II complexes. TRAPP I plays a key role in the late stages of endoplasmic reticulum to Golgi traffic. TRAPP II seems to play a role in intra-Golgi transport. Has a role late in meiosis following DNA replication. This is Transport protein particle subunit trs85-1 (trs85-1) from Schizosaccharomyces pombe (strain 972 / ATCC 24843) (Fission yeast).